The following is a 240-amino-acid chain: Ribonuclease PH (240 aa).

Residues arginine 86 and 124–126 (GTR) contribute to the phosphate site.

Belongs to the RNase PH family. In terms of assembly, homohexameric ring arranged as a trimer of dimers.

It carries out the reaction tRNA(n+1) + phosphate = tRNA(n) + a ribonucleoside 5'-diphosphate. In terms of biological role, phosphorolytic 3'-5' exoribonuclease that plays an important role in tRNA 3'-end maturation. Removes nucleotide residues following the 3'-CCA terminus of tRNAs; can also add nucleotides to the ends of RNA molecules by using nucleoside diphosphates as substrates, but this may not be physiologically important. Probably plays a role in initiation of 16S rRNA degradation (leading to ribosome degradation) during starvation. The sequence is that of Ribonuclease PH from Rhodospirillum rubrum (strain ATCC 11170 / ATH 1.1.1 / DSM 467 / LMG 4362 / NCIMB 8255 / S1).